The primary structure comprises 347 residues: D-alanine--D-alanine ligase (347 aa).

An ATP-grasp domain is found at 131–333; that stretch reads KRVLESAGIA…YPELIERLVD (203 aa). 161-216 is an ATP binding site; sequence EEKLAYPVFAKPSNMGSSVGISKSENQEELRQALKLAFRYDSRVLVEQGVNAREIE. Mg(2+)-binding residues include Asp-287, Glu-300, and Asn-302.

The protein belongs to the D-alanine--D-alanine ligase family. It depends on Mg(2+) as a cofactor. Requires Mn(2+) as cofactor.

It is found in the cytoplasm. The enzyme catalyses 2 D-alanine + ATP = D-alanyl-D-alanine + ADP + phosphate + H(+). The protein operates within cell wall biogenesis; peptidoglycan biosynthesis. Cell wall formation. The protein is D-alanine--D-alanine ligase of Streptococcus pneumoniae (strain P1031).